The primary structure comprises 555 residues: Solute carrier family 2, facilitated glucose transporter member 10 (555 aa).

At 1–15 (MGLSSPTLILAATVS) the chain is on the cytoplasmic side. The helical transmembrane segment at 16-36 (LLGGIVFGYELGIISGALLVL) threads the bilayer. Residues 37 to 48 (KTVYQLTCFEQE) lie on the Extracellular side of the membrane. A helical transmembrane segment spans residues 49 to 69 (ALVSAVLFGALLASLIGGIII). Topologically, residues 70 to 82 (DRWGRRTAILASN) are cytoplasmic. Residues 83-103 (LVVLAGSIILIATSTFWWLIV) form a helical membrane-spanning segment. The Extracellular portion of the chain corresponds to 104-105 (GR). Residues 106-126 (VTIGFAISISSMACCIYVSEI) form a helical membrane-spanning segment. At 127-132 (VRPHQR) the chain is on the cytoplasmic side. A helical membrane pass occupies residues 133–153 (GMLVSLYETGITVGILISYAM). The Extracellular portion of the chain corresponds to 154–165 (NYFLSGVNESWK). Residue asparagine 161 is glycosylated (N-linked (GlcNAc...) asparagine). A helical transmembrane segment spans residues 166–186 (YMFGLAIVPAAFQFISILFLP). The Cytoplasmic portion of the chain corresponds to 187–240 (SKPHKLNFWEQDTDDGFIELEETGEAGEFKPDTYDRQYTFLDLFRSKDNMRTRT). Residues 241–261 (LLGLGLVLFQQFTGQPNVLYY) traverse the membrane as a helical segment. 250-251 (QQ) lines the D-glucose pocket. Residues 262–277 (ASTIFQSVGFQSNSSA) are Extracellular-facing. A glycan (N-linked (GlcNAc...) asparagine) is linked at asparagine 274. Residues 278–298 (VLASVGLGVVKVASTLIAICF) form a helical membrane-spanning segment. At 299-305 (ADKAGRR) the chain is on the cytoplasmic side. Residues 306–326 (ILLLAGCIVMTIAITGIGIVS) traverse the membrane as a helical segment. Residues 327 to 415 (FTVKMDSHRD…ASPELPSNYT (89 aa)) lie on the Extracellular side of the membrane. N-linked (GlcNAc...) asparagine glycans are attached at residues asparagine 344, asparagine 351, asparagine 400, and asparagine 413. Residues 416–436 (ILNWITLLSMMAFVSAFSIGF) traverse the membrane as a helical segment. The Cytoplasmic portion of the chain corresponds to 437–464 (GPMTWIVLSEIYPADIRGRAFAFCNSFN). Tryptophan 441 provides a ligand contact to D-glucose. A helical transmembrane segment spans residues 465–483 (WAANLLITLTFLDVIASIG). The Extracellular segment spans residues 484–485 (LS). Residues 486-506 (WTFLLYGVVGLLAIAFIYFFI) traverse the membrane as a helical segment. Residues 507–555 (PETKGQSLEEIDKQFSTKRILQKRETSKGVGKRPSSGPPYQRIGKASPS) are Cytoplasmic-facing. Positions 528 to 555 (QKRETSKGVGKRPSSGPPYQRIGKASPS) are disordered.

The protein belongs to the major facilitator superfamily. Sugar transporter (TC 2.A.1.1) family. Glucose transporter subfamily.

It localises to the endomembrane system. The protein localises to the cytoplasm. Its subcellular location is the perinuclear region. It catalyses the reaction D-glucose(out) = D-glucose(in). Facilitative glucose transporter required for the development of the cardiovascular system. This is Solute carrier family 2, facilitated glucose transporter member 10 from Xenopus tropicalis (Western clawed frog).